We begin with the raw amino-acid sequence, 256 residues long: Thiazole synthase (256 aa).

Lysine 95 (schiff-base intermediate with DXP) is an active-site residue. Residues glycine 156, 182-183 (AG), and 204-205 (NT) contribute to the 1-deoxy-D-xylulose 5-phosphate site.

Belongs to the ThiG family. As to quaternary structure, homotetramer. Forms heterodimers with either ThiH or ThiS.

It localises to the cytoplasm. It carries out the reaction [ThiS sulfur-carrier protein]-C-terminal-Gly-aminoethanethioate + 2-iminoacetate + 1-deoxy-D-xylulose 5-phosphate = [ThiS sulfur-carrier protein]-C-terminal Gly-Gly + 2-[(2R,5Z)-2-carboxy-4-methylthiazol-5(2H)-ylidene]ethyl phosphate + 2 H2O + H(+). It functions in the pathway cofactor biosynthesis; thiamine diphosphate biosynthesis. In terms of biological role, catalyzes the rearrangement of 1-deoxy-D-xylulose 5-phosphate (DXP) to produce the thiazole phosphate moiety of thiamine. Sulfur is provided by the thiocarboxylate moiety of the carrier protein ThiS. In vitro, sulfur can be provided by H(2)S. The protein is Thiazole synthase of Escherichia coli O127:H6 (strain E2348/69 / EPEC).